The sequence spans 250 residues: 2,3-bisphosphoglycerate-dependent phosphoglycerate mutase (250 aa).

Residues 10 to 17 (RHGESQWN), 23 to 24 (TG), Arg62, 89 to 92 (ERHY), Lys100, 116 to 117 (RR), and 185 to 186 (GN) each bind substrate. Catalysis depends on His11, which acts as the Tele-phosphohistidine intermediate. The active-site Proton donor/acceptor is the Glu89.

The protein belongs to the phosphoglycerate mutase family. BPG-dependent PGAM subfamily. As to quaternary structure, homodimer.

It carries out the reaction (2R)-2-phosphoglycerate = (2R)-3-phosphoglycerate. It functions in the pathway carbohydrate degradation; glycolysis; pyruvate from D-glyceraldehyde 3-phosphate: step 3/5. In terms of biological role, catalyzes the interconversion of 2-phosphoglycerate and 3-phosphoglycerate. The chain is 2,3-bisphosphoglycerate-dependent phosphoglycerate mutase from Salmonella dublin (strain CT_02021853).